The chain runs to 222 residues: Protein CicA (222 aa).

This chain is Protein CicA (cicA), found in Caulobacter vibrioides (strain ATCC 19089 / CIP 103742 / CB 15) (Caulobacter crescentus).